Reading from the N-terminus, the 323-residue chain is Beta-ketoacyl-[acyl-carrier-protein] synthase III (323 aa).

Residues cysteine 114 and histidine 250 contribute to the active site. Residues 251 to 255 (QANLR) are ACP-binding. The active site involves asparagine 280.

This sequence belongs to the thiolase-like superfamily. FabH family. In terms of assembly, homodimer.

The protein localises to the cytoplasm. It catalyses the reaction malonyl-[ACP] + acetyl-CoA + H(+) = 3-oxobutanoyl-[ACP] + CO2 + CoA. The protein operates within lipid metabolism; fatty acid biosynthesis. In terms of biological role, catalyzes the condensation reaction of fatty acid synthesis by the addition to an acyl acceptor of two carbons from malonyl-ACP. Catalyzes the first condensation reaction which initiates fatty acid synthesis and may therefore play a role in governing the total rate of fatty acid production. Possesses both acetoacetyl-ACP synthase and acetyl transacylase activities. Its substrate specificity determines the biosynthesis of branched-chain and/or straight-chain of fatty acids. In Cereibacter sphaeroides (strain ATCC 17029 / ATH 2.4.9) (Rhodobacter sphaeroides), this protein is Beta-ketoacyl-[acyl-carrier-protein] synthase III.